The chain runs to 552 residues: CTP synthase (552 aa).

Positions 1–265 are amidoligase domain; sequence MTKYIFITGG…DEIVVRKLRL (265 aa). S13 contacts CTP. UTP is bound at residue S13. ATP is bound by residues 14 to 19 and D71; that span reads SLGKGI. D71 and E139 together coordinate Mg(2+). CTP-binding positions include 146-148, 186-191, and K222; these read DIE and KTKPTQ. Residues 186 to 191 and K222 contribute to the UTP site; that span reads KTKPTQ. Residues 290–541 form the Glutamine amidotransferase type-1 domain; it reads TVAMVGKYVN…VRAARARSEG (252 aa). G351 serves as a coordination point for L-glutamine. C378 functions as the Nucleophile; for glutamine hydrolysis in the catalytic mechanism. L-glutamine-binding positions include 379-382, E402, and R469; that span reads LGMQ. Active-site residues include H514 and E516.

Belongs to the CTP synthase family. In terms of assembly, homotetramer.

It carries out the reaction UTP + L-glutamine + ATP + H2O = CTP + L-glutamate + ADP + phosphate + 2 H(+). It catalyses the reaction L-glutamine + H2O = L-glutamate + NH4(+). The enzyme catalyses UTP + NH4(+) + ATP = CTP + ADP + phosphate + 2 H(+). Its pathway is pyrimidine metabolism; CTP biosynthesis via de novo pathway; CTP from UDP: step 2/2. With respect to regulation, allosterically activated by GTP, when glutamine is the substrate; GTP has no effect on the reaction when ammonia is the substrate. The allosteric effector GTP functions by stabilizing the protein conformation that binds the tetrahedral intermediate(s) formed during glutamine hydrolysis. Inhibited by the product CTP, via allosteric rather than competitive inhibition. In terms of biological role, catalyzes the ATP-dependent amination of UTP to CTP with either L-glutamine or ammonia as the source of nitrogen. Regulates intracellular CTP levels through interactions with the four ribonucleotide triphosphates. The polypeptide is CTP synthase (Methylococcus capsulatus (strain ATCC 33009 / NCIMB 11132 / Bath)).